A 581-amino-acid polypeptide reads, in one-letter code: Leucine-rich repeat-containing protein 47 (581 aa).

LRR repeat units lie at residues 78-97, 102-123, 132-154, 156-177, 182-204, 205-227, and 228-248; these read QLHSLVLRRNALGPGLSPEL, ALRVLDLSGNALETLPPGEGLG, QLQSLNLSGNRLRELPADLARCA, RLQSLNLTGNRLDAFPPELFRP, LLSELAAADNCLRELSPDIAHLA, SLKTLDLSNNQLTEIPAELADCP, and KLKEINFRGNRLRDKRLEKMV. A disordered region spans residues 262 to 301; sequence AGGRGGRSKGRQEASEKEDRKKRRERKQHRESGEGEEEVA. Over residues 271-280 the composition is skewed to basic and acidic residues; sequence GRQEASEKED. Phosphoserine occurs at positions 314, 430, and 519. A coiled-coil region spans residues 401–436; it reads LGRKEAKAKELVRQLQLEAEEQRKQKKRQSVSGLHR.

The sequence is that of Leucine-rich repeat-containing protein 47 (Lrrc47) from Mus musculus (Mouse).